The sequence spans 199 residues: NAD(P)H dehydrogenase (quinone) (199 aa).

A Flavodoxin-like domain is found at Val4 to Val190. FMN is bound by residues Ser10 to Ile15 and Thr79 to Phe81. Tyr12 is an NAD(+) binding site. Trp99 provides a ligand contact to substrate. Position 134 (His134) interacts with FMN.

It belongs to the WrbA family. The cofactor is FMN.

The enzyme catalyses a quinone + NADH + H(+) = a quinol + NAD(+). It catalyses the reaction a quinone + NADPH + H(+) = a quinol + NADP(+). This chain is NAD(P)H dehydrogenase (quinone), found in Tolumonas auensis (strain DSM 9187 / NBRC 110442 / TA 4).